Here is a 218-residue protein sequence, read N- to C-terminus: Large ribosomal subunit protein uL4 (218 aa).

The interval 55–83 is disordered; sequence THATKTRGMVSGGGKKPWKQKGTGRARQG.

It belongs to the universal ribosomal protein uL4 family. Part of the 50S ribosomal subunit.

One of the primary rRNA binding proteins, this protein initially binds near the 5'-end of the 23S rRNA. It is important during the early stages of 50S assembly. It makes multiple contacts with different domains of the 23S rRNA in the assembled 50S subunit and ribosome. Its function is as follows. Forms part of the polypeptide exit tunnel. In Bifidobacterium longum (strain DJO10A), this protein is Large ribosomal subunit protein uL4.